Here is a 244-residue protein sequence, read N- to C-terminus: Transforming protein v-Fos/v-Fox (244 aa).

The interval 1–236 (DSLSYYHSPA…LFPASSGHSG (236 aa)) is transforming protein v-Fos. In terms of domain architecture, bZIP spans 113 to 176 (EVKRRIRRER…EKLEFILAAH (64 aa)). The tract at residues 115–135 (KRRIRRERNKMAAAKCRNRRR) is basic motif. Residues 141–169 (LQAETDQLEDEKSALQTEIANLLKEKEKL) are leucine-zipper. The segment at 237-244 (FISMAGWQ) is transforming protein v-Fox.

The protein belongs to the bZIP family. Fos subfamily.

The protein localises to the host nucleus. This Mus musculus (Mouse) protein is Transforming protein v-Fos/v-Fox (FOS-FOX).